The chain runs to 367 residues: MSSSQTLVVKLGTSVLTGGSRRLNRAHIVELVRQCAQQHAAGHRIVIVTSGAMAAGREHLGYPELPPTIASKQLLAAVGQSRLIQLWEQMFSIYGIHIGQMLLTRADLEDRERFLNARDTLRALLDNHIVPVINENDAVATAEIKVGDNDNLSALAAILAGADKLLLLTDQQGLFTADPRNNPQAELIRDVRGIDDDLRALAGDSVSGLGTGGMATKLQAADIACRAGIDTIIAAGSRPGVIGDVIASHPVGTCFHALETPLENRKRWIFGAPPAGELVVDDGALSAILERGSSLLPKGIREISGNFSRGEVIRIRSLQGRDVAHGVSRYNSDAMRMIAGHHSQQIGEILGYEYGPVAIHRDDMIVS.

Lys10 contacts ATP. Residues Ser50, Asp137, and Asn149 each contribute to the substrate site. ATP-binding positions include 169–170 (TD) and 211–217 (TGGMATK). One can recognise a PUA domain in the interval 275–353 (AGELVVDDGA…QQIGEILGYE (79 aa)).

The protein belongs to the glutamate 5-kinase family.

The protein localises to the cytoplasm. The enzyme catalyses L-glutamate + ATP = L-glutamyl 5-phosphate + ADP. It functions in the pathway amino-acid biosynthesis; L-proline biosynthesis; L-glutamate 5-semialdehyde from L-glutamate: step 1/2. Functionally, catalyzes the transfer of a phosphate group to glutamate to form L-glutamate 5-phosphate. The chain is Glutamate 5-kinase from Erwinia tasmaniensis (strain DSM 17950 / CFBP 7177 / CIP 109463 / NCPPB 4357 / Et1/99).